The sequence spans 412 residues: MLAAPLPSFSTDAFDQVVMSTYGRFPITLVRGEGCRVWDDQGRSYLDFVAGIATCTLGHAHPALVETVSRQMQTLHHVSNLYYIPQQGALAQWLVAHSCGDRVFFCNSGAEANEAAIKLARKYAHTVRHIANPIIITAQASFHGRTLATITATGQPKYQKYFDPLVPGFAYVPYNDLGALEALVASLDQPQPQVAAILLEPLQGEGGVRPGDRAYFEQVRQLCTEKGILLIFDEVQVGMGRTGSLWGYETLGVEPDIFTSAKGLAGGVPIGAMIAKEFCAVFQPGDHASTFGGNPLATAAALTVCETLEKENLLENVRDRGQQLRTGLQELAAAYPQVIAEVRGWGLINGLELQPDTPLTAAEVVKAALAEGLLLVPAGPKVVRFVPPLIVSATEIDMALGAMSRALAHLAA.

Pyridoxal 5'-phosphate is bound by residues 109-110 (GA) and Phe142. Arg145 is a binding site for N(2)-acetyl-L-ornithine. Position 233-236 (233-236 (DEVQ)) interacts with pyridoxal 5'-phosphate. The residue at position 262 (Lys262) is an N6-(pyridoxal phosphate)lysine. Ser289 is a N(2)-acetyl-L-ornithine binding site. Thr290 contributes to the pyridoxal 5'-phosphate binding site.

It belongs to the class-III pyridoxal-phosphate-dependent aminotransferase family. ArgD subfamily. As to quaternary structure, homodimer. Requires pyridoxal 5'-phosphate as cofactor.

Its subcellular location is the cytoplasm. It catalyses the reaction N(2)-acetyl-L-ornithine + 2-oxoglutarate = N-acetyl-L-glutamate 5-semialdehyde + L-glutamate. Its pathway is amino-acid biosynthesis; L-arginine biosynthesis; N(2)-acetyl-L-ornithine from L-glutamate: step 4/4. The chain is Acetylornithine aminotransferase from Thermosynechococcus vestitus (strain NIES-2133 / IAM M-273 / BP-1).